The chain runs to 314 residues: Glycine--tRNA ligase alpha subunit (314 aa).

Belongs to the class-II aminoacyl-tRNA synthetase family. As to quaternary structure, tetramer of two alpha and two beta subunits.

Its subcellular location is the cytoplasm. It carries out the reaction tRNA(Gly) + glycine + ATP = glycyl-tRNA(Gly) + AMP + diphosphate. This Mesorhizobium japonicum (strain LMG 29417 / CECT 9101 / MAFF 303099) (Mesorhizobium loti (strain MAFF 303099)) protein is Glycine--tRNA ligase alpha subunit.